The following is a 183-amino-acid chain: Probable GTP-binding protein EngB (183 aa).

An EngB-type G domain is found at 18–183; that stretch reads DQNEIVFWGR…LSDLVEHFEL (166 aa). GTP-binding positions include 26–33, 52–56, 70–73, 137–140, and 166–168; these read GRSNVGKS, GRTRL, DLPG, TKID, and VSS. The Mg(2+) site is built by S33 and T54.

It belongs to the TRAFAC class TrmE-Era-EngA-EngB-Septin-like GTPase superfamily. EngB GTPase family. The cofactor is Mg(2+).

In terms of biological role, necessary for normal cell division and for the maintenance of normal septation. The polypeptide is Probable GTP-binding protein EngB (Metamycoplasma arthritidis (strain 158L3-1) (Mycoplasma arthritidis)).